Here is a 265-residue protein sequence, read N- to C-terminus: Phosphonates import ATP-binding protein PhnC 1 (265 aa).

One can recognise an ABC transporter domain in the interval 3 to 247 (LRLSGIELRH…HLDTLYANEQ (245 aa)). 36–43 (GPSGAGKT) is a binding site for ATP. A disordered region spans residues 245-265 (NEQLSPQPAPDVSETPWTPRC).

The protein belongs to the ABC transporter superfamily. Phosphonates importer (TC 3.A.1.9.1) family. The complex is composed of two ATP-binding proteins (PhnC), two transmembrane proteins (PhnE) and a solute-binding protein (PhnD).

Its subcellular location is the cell inner membrane. The enzyme catalyses phosphonate(out) + ATP + H2O = phosphonate(in) + ADP + phosphate + H(+). In terms of biological role, part of the ABC transporter complex PhnCDE involved in phosphonates import. Responsible for energy coupling to the transport system. The polypeptide is Phosphonates import ATP-binding protein PhnC 1 (Pseudomonas savastanoi pv. phaseolicola (strain 1448A / Race 6) (Pseudomonas syringae pv. phaseolicola (strain 1448A / Race 6))).